A 77-amino-acid chain; its full sequence is Translation initiation factor IF-1, chloroplastic (77 aa).

Residues 1–72 (MNKQGLFQME…TKGRIVYRQR (72 aa)) form the S1-like domain.

This sequence belongs to the IF-1 family. In terms of assembly, component of the 30S ribosomal translation pre-initiation complex which assembles on the 30S ribosome in the order IF-2 and IF-3, IF-1 and N-formylmethionyl-tRNA(fMet); mRNA recruitment can occur at any time during PIC assembly.

It localises to the plastid. The protein resides in the chloroplast. Functionally, one of the essential components for the initiation of protein synthesis. Stabilizes the binding of IF-2 and IF-3 on the 30S subunit to which N-formylmethionyl-tRNA(fMet) subsequently binds. Helps modulate mRNA selection, yielding the 30S pre-initiation complex (PIC). Upon addition of the 50S ribosomal subunit IF-1, IF-2 and IF-3 are released leaving the mature 70S translation initiation complex. The protein is Translation initiation factor IF-1, chloroplastic of Nephroselmis olivacea (Green alga).